An 865-amino-acid polypeptide reads, in one-letter code: MITTKELRNKFINYFESKNHSHQPSSSLIPFGDDTLLFTNAGMVQFKDVFLGIEKKDFSRAVTVQKCLRAGGKHNDLDNVGYTARHHTFFEMLGNFSFGDYFKKEAISFAWEFLTKEIKLPVEKLWVTIYASDDEAFDVWHKHIGLAKERIIRIDSSDNFWSMGDTGPCGPCTEIFYDHGEDVAGGLPGTPEQDGDRYIEIWNIVFMQYNRHADGSTTDLPKPSVDTGMGLERISAVLQNVHSNYEIDLFQALIKKAQQVTHAKDINSPSLKVIADHIRACAFLIADGVLPANEGRGYVLRRIIRRAIRHGNKVGAKEIFFYKLVAELVSQMGEAYSQLIDKRELIEKTLIKEEELFLKTIENGIKIFDAEIENLKDNTISGEVAFKLYDTYGFPFDLTADMAREKGLKVDEQAFLAQMQIQKQRSKEAGKFNVDYNSLINSQVKSEFRGYSTLIEDAKVLEIYQDGQLVASTSEQVSAVVVLDKTPFYAESGGQVGDKGILEGIGFEFVVEDVQKSGEAILHIGKLVKGRLNLNDELTARVSDKPRLATAANHSATHLLHKALKLVLGGHAEQKGSLVDENRLRFDFTHDKAISRSEIEQIELLVNQQIRANYPVTTIETSQQKAKSLGAEALFGEKYGDIVRVISMGDFSIELCGGTHVAYTGDIGLFKVTSEGSIASGVRRIEAVTADKAIRHTFTNENKIIAIKDSLKANDTNLIDKIKSMLEQIKNQEKQIAKLKKELLSGSSNDIKETNIGDIKVVVANVDGVDVKTLRNKIDDYKSKNTKVIAVLTTTNADKVQFVIGVSNALTTLIKAGDIAKELSSHIDGKGGGRADMAQGGGNNSANIDQALSQVEKFILNNIKE.

4 residues coordinate Zn(2+): histidine 554, histidine 558, cysteine 656, and histidine 660.

This sequence belongs to the class-II aminoacyl-tRNA synthetase family. It depends on Zn(2+) as a cofactor.

It is found in the cytoplasm. It carries out the reaction tRNA(Ala) + L-alanine + ATP = L-alanyl-tRNA(Ala) + AMP + diphosphate. In terms of biological role, catalyzes the attachment of alanine to tRNA(Ala) in a two-step reaction: alanine is first activated by ATP to form Ala-AMP and then transferred to the acceptor end of tRNA(Ala). Also edits incorrectly charged Ser-tRNA(Ala) and Gly-tRNA(Ala) via its editing domain. This chain is Alanine--tRNA ligase, found in Francisella tularensis subsp. tularensis (strain WY96-3418).